A 222-amino-acid chain; its full sequence is MVPYHIRQYQDSDHKRVVDVFTKGMEEYIPSTFRHMLMLPRTLLLLLGVPLALVLVSGSWILAVICIFFLLLLLRLLARQPWKEYVAKCLQTDMVDITKSYLNVHGACFWVAESGGQVVGIVAAQPVKDPPLGRKQLQLFRLSVSSQHRGQGIAKALTRTVLQFARDQSYSDVVLETSALQQGAVTLYLGMGFKKAGQYFMSIFWRLAGICTIQLKYSFPSA.

The helical transmembrane segment at 53–73 threads the bilayer; the sequence is LVLVSGSWILAVICIFFLLLL. The N-acetyltransferase domain maps to 69 to 220; it reads FLLLLLRLLA…CTIQLKYSFP (152 aa).

This sequence belongs to the camello family.

It localises to the membrane. Its function is as follows. May play a role in regulation of gastrulation. The chain is N-acetyltransferase 8F1 from Mus musculus (Mouse).